The following is a 113-amino-acid chain: Large ribosomal subunit protein eL34 (113 aa).

Belongs to the eukaryotic ribosomal protein eL34 family.

This Methanopyrus kandleri (strain AV19 / DSM 6324 / JCM 9639 / NBRC 100938) protein is Large ribosomal subunit protein eL34.